We begin with the raw amino-acid sequence, 469 residues long: ATP synthase subunit beta (469 aa).

156 to 163 provides a ligand contact to ATP; that stretch reads GGAGVGKT.

Belongs to the ATPase alpha/beta chains family. As to quaternary structure, F-type ATPases have 2 components, CF(1) - the catalytic core - and CF(0) - the membrane proton channel. CF(1) has five subunits: alpha(3), beta(3), gamma(1), delta(1), epsilon(1). CF(0) has three main subunits: a(1), b(2) and c(9-12). The alpha and beta chains form an alternating ring which encloses part of the gamma chain. CF(1) is attached to CF(0) by a central stalk formed by the gamma and epsilon chains, while a peripheral stalk is formed by the delta and b chains.

The protein resides in the cell membrane. It catalyses the reaction ATP + H2O + 4 H(+)(in) = ADP + phosphate + 5 H(+)(out). In terms of biological role, produces ATP from ADP in the presence of a proton gradient across the membrane. The catalytic sites are hosted primarily by the beta subunits. In Lactococcus lactis subsp. cremoris (strain MG1363), this protein is ATP synthase subunit beta.